The sequence spans 111 residues: C-X-C motif chemokine 14 (111 aa).

The signal sequence occupies residues Met-1–Gly-34. 2 cysteine pairs are disulfide-bonded: Cys-37-Cys-63 and Cys-39-Cys-84. The D-box signature appears at Met-67 to Gln-81.

Belongs to the intercrine alpha (chemokine CxC) family. Post-translationally, ubiquitinated, followed by degradation by the proteasome. In terms of tissue distribution, expressed in heart, brain, placenta, lung, liver, skeletal muscle, kidney and pancreas. Highly expressed in normal tissue without inflammatory stimuli and infrequently expressed in cancer cell lines. Weakly expressed in monocyte-derived dendritic cells. Not detected in lung or unstimulated peripheral blood lymphocytes.

It is found in the secreted. Functionally, potent chemoattractant for neutrophils, and weaker for dendritic cells. Not chemotactic for T-cells, B-cells, monocytes, natural killer cells or granulocytes. Does not inhibit proliferation of myeloid progenitors in colony formation assays. In Homo sapiens (Human), this protein is C-X-C motif chemokine 14 (CXCL14).